Reading from the N-terminus, the 720-residue chain is ATP-dependent DNA helicase Hel308 (720 aa).

ATP-binding positions include Ser-23, Gln-28, and 46-53 (IPTASGKT). A Helicase ATP-binding domain is found at 33-197 (KSGILEGKNA…WLNAELIVSD (165 aa)). A DEAH box motif is present at residues 145-148 (DEIH). One can recognise a Helicase C-terminal domain in the interval 229–422 (LVYDAIRKKK…NLRSQVLALI (194 aa)).

This sequence belongs to the helicase family. Hel308 subfamily. In terms of assembly, monomer. Interacts with PCNA. Mg(2+) serves as cofactor. It depends on Zn(2+) as a cofactor.

It carries out the reaction Couples ATP hydrolysis with the unwinding of duplex DNA by translocating in the 3'-5' direction.. It catalyses the reaction ATP + H2O = ADP + phosphate + H(+). Functionally, DNA-dependent ATPase and 3'-5' DNA helicase that may be involved in repair of stalled replication forks. Unwinds the lagging strand from forked DNA structures in a 3'-5' direction. PCNA, the DNA polymerase sliding clamp subunit, stimulates the helicase activity, and may alter substrate specificity. Unwinds branched DNA (Holliday junctions) in an ATP-dependent fashion; ss- and dsDNA stimulate ATPase to the greatest extent, although it preferentially binds DNA with a single-stranded region. Processes a RecA-mediated recombination intermediate between gapped circular and homologous linear dsDNA. The polypeptide is ATP-dependent DNA helicase Hel308 (Pyrococcus furiosus (strain ATCC 43587 / DSM 3638 / JCM 8422 / Vc1)).